The chain runs to 157 residues: MSEQQNQEMTFQIQRIYTKDISFEAPNAPQVFQKEWQPEVKLDLDTSSNTLAENVYEVILRVTVTATMEEETAFLCEVQQAGIFTVEGIEGTQLAHCLGAYCPNVLFPYARECITNLVGRGTFPQLNLAPVNFDALFMNYLQQQQQQDAANSGVEEA.

This sequence belongs to the SecB family. Homotetramer, a dimer of dimers. One homotetramer interacts with 1 SecA dimer.

Its subcellular location is the cytoplasm. In terms of biological role, one of the proteins required for the normal export of preproteins out of the cell cytoplasm. It is a molecular chaperone that binds to a subset of precursor proteins, maintaining them in a translocation-competent state. It also specifically binds to its receptor SecA. This is Protein-export protein SecB from Proteus mirabilis (strain HI4320).